The chain runs to 214 residues: Ribosomal RNA large subunit methyltransferase E (214 aa).

The S-adenosyl-L-methionine site is built by glycine 60, tryptophan 62, aspartate 86, aspartate 102, and aspartate 127. Lysine 167 acts as the Proton acceptor in catalysis.

The protein belongs to the class I-like SAM-binding methyltransferase superfamily. RNA methyltransferase RlmE family.

It is found in the cytoplasm. The catalysed reaction is uridine(2552) in 23S rRNA + S-adenosyl-L-methionine = 2'-O-methyluridine(2552) in 23S rRNA + S-adenosyl-L-homocysteine + H(+). Specifically methylates the uridine in position 2552 of 23S rRNA at the 2'-O position of the ribose in the fully assembled 50S ribosomal subunit. The protein is Ribosomal RNA large subunit methyltransferase E of Janthinobacterium sp. (strain Marseille) (Minibacterium massiliensis).